The chain runs to 328 residues: Phosphate acyltransferase (328 aa).

It belongs to the PlsX family. Homodimer. Probably interacts with PlsY.

It is found in the cytoplasm. The catalysed reaction is a fatty acyl-[ACP] + phosphate = an acyl phosphate + holo-[ACP]. It participates in lipid metabolism; phospholipid metabolism. Its function is as follows. Catalyzes the reversible formation of acyl-phosphate (acyl-PO(4)) from acyl-[acyl-carrier-protein] (acyl-ACP). This enzyme utilizes acyl-ACP as fatty acyl donor, but not acyl-CoA. In Mycoplasma genitalium (strain ATCC 33530 / DSM 19775 / NCTC 10195 / G37) (Mycoplasmoides genitalium), this protein is Phosphate acyltransferase.